The primary structure comprises 547 residues: CTP synthase (547 aa).

Residues 1-265 form an amidoligase domain region; sequence MARYVFITGG…DQAVLDAFGI (265 aa). Position 13 (serine 13) interacts with CTP. Serine 13 contacts UTP. Residues 14–19 and aspartate 71 each bind ATP; that span reads SLGKGL. Mg(2+)-binding residues include aspartate 71 and glutamate 139. CTP contacts are provided by residues 146–148, 186–191, and lysine 222; these read DIE and KTKPTQ. UTP contacts are provided by residues 186-191 and lysine 222; that span reads KTKPTQ. Residues 291–546 form the Glutamine amidotransferase type-1 domain; that stretch reads RVAIVGKYTQ…IRAAVEVSRL (256 aa). An L-glutamine-binding site is contributed by glycine 353. Cysteine 380 functions as the Nucleophile; for glutamine hydrolysis in the catalytic mechanism. Residues 381–384, glutamate 404, and arginine 474 contribute to the L-glutamine site; that span reads LGMQ. Active-site residues include histidine 519 and glutamate 521.

Belongs to the CTP synthase family. Homotetramer.

The enzyme catalyses UTP + L-glutamine + ATP + H2O = CTP + L-glutamate + ADP + phosphate + 2 H(+). It carries out the reaction L-glutamine + H2O = L-glutamate + NH4(+). It catalyses the reaction UTP + NH4(+) + ATP = CTP + ADP + phosphate + 2 H(+). It participates in pyrimidine metabolism; CTP biosynthesis via de novo pathway; CTP from UDP: step 2/2. With respect to regulation, allosterically activated by GTP, when glutamine is the substrate; GTP has no effect on the reaction when ammonia is the substrate. The allosteric effector GTP functions by stabilizing the protein conformation that binds the tetrahedral intermediate(s) formed during glutamine hydrolysis. Inhibited by the product CTP, via allosteric rather than competitive inhibition. Catalyzes the ATP-dependent amination of UTP to CTP with either L-glutamine or ammonia as the source of nitrogen. Regulates intracellular CTP levels through interactions with the four ribonucleotide triphosphates. The polypeptide is CTP synthase (Cereibacter sphaeroides (strain ATCC 17025 / ATH 2.4.3) (Rhodobacter sphaeroides)).